The sequence spans 1302 residues: Regulator of telomere elongation helicase 1 (1302 aa).

One can recognise a Helicase ATP-binding domain in the interval 7–297 (NGVTVDFPFQ…TKTAQQGEPH (291 aa)). 42–49 (SHTGTGKT) serves as a coordination point for ATP. C146, C164, C173, and C208 together coordinate [4Fe-4S] cluster. Positions 152–168 (KKQESNHIQIHLCRKKV) match the Nuclear localization signal motif. Positions 251–254 (DEAH) match the DEAH box motif. Residues 758 to 767 (PAPAPRATAP) show a composition bias toward low complexity. The segment at 758 to 819 (PAPAPRATAP…AAGDPESSLC (62 aa)) is disordered. Over residues 770–780 (REGEDAVREVK) the composition is skewed to basic and acidic residues. The Nuclear localization signal motif lies at 873–879 (PRGGRKK). 4 disordered regions span residues 981–1006 (RPEHSIPRRQPAQPVLDPTGRTAPDP), 1019–1058 (DPREHLNQGRPHLSPRPPPTGDPGSHPQWRSGVPRAGKQG), 1134–1153 (CTDLTGRPYPGMERPGPQEE), and 1160–1234 (VLTH…QAAG). The segment covering 1178–1187 (KTQSKISSLL) has biased composition (polar residues). Residues 1180–1187 (QSKISSLL) carry the PIP-box motif.

It belongs to the helicase family. RAD3/XPD subfamily. In terms of assembly, interacts with TERF1. Interacts (via PIP-box) with PCNA; the interaction is direct and essential for suppressing telomere fragility. Interacts with MMS19; the interaction mediates the association of RTEL1 with the cytosolic iron-sulfur protein assembly (CIA) complex.

The protein resides in the nucleus. It carries out the reaction ATP + H2O = ADP + phosphate + H(+). Its function is as follows. A probable ATP-dependent DNA helicase implicated in telomere-length regulation, DNA repair and the maintenance of genomic stability. Acts as an anti-recombinase to counteract toxic recombination and limit crossover during meiosis. Regulates meiotic recombination and crossover homeostasis by physically dissociating strand invasion events and thereby promotes noncrossover repair by meiotic synthesis dependent strand annealing (SDSA) as well as disassembly of D loop recombination intermediates. Also disassembles T loops and prevents telomere fragility by counteracting telomeric G4-DNA structures, which together ensure the dynamics and stability of the telomere. This chain is Regulator of telomere elongation helicase 1, found in Pongo abelii (Sumatran orangutan).